Here is a 154-residue protein sequence, read N- to C-terminus: Superoxide dismutase [Cu-Zn] (154 aa).

Residues histidine 47, histidine 49, and histidine 64 each contribute to the Cu cation site. Cysteine 58 and cysteine 147 are joined by a disulfide. Zn(2+) contacts are provided by histidine 64, histidine 72, histidine 81, and aspartate 84. Cu cation is bound at residue histidine 121. Over residues 125-137 (DDLGRSEHPESKK) the composition is skewed to basic and acidic residues. The disordered stretch occupies residues 125–144 (DDLGRSEHPESKKTGNAGAR). Arginine 144 contacts substrate.

This sequence belongs to the Cu-Zn superoxide dismutase family. As to quaternary structure, homodimer. Cu cation is required as a cofactor. Requires Zn(2+) as cofactor.

The protein localises to the cytoplasm. The catalysed reaction is 2 superoxide + 2 H(+) = H2O2 + O2. In terms of biological role, destroys radicals which are normally produced within the cells and which are toxic to biological systems. The chain is Superoxide dismutase [Cu-Zn] (sodC) from Aspergillus oryzae (strain ATCC 42149 / RIB 40) (Yellow koji mold).